The following is a 261-amino-acid chain: Orotidine 5'-phosphate decarboxylase (261 aa).

Substrate-binding positions include Asp34, 56-58 (KTH), 88-97 (DRKFADIGNT), Tyr214, and Arg232. Catalysis depends on Lys90, which acts as the Proton donor.

This sequence belongs to the OMP decarboxylase family.

It carries out the reaction orotidine 5'-phosphate + H(+) = UMP + CO2. It participates in pyrimidine metabolism; UMP biosynthesis via de novo pathway; UMP from orotate: step 2/2. The chain is Orotidine 5'-phosphate decarboxylase (URA3) from Kodamaea ohmeri (Yeast).